A 578-amino-acid chain; its full sequence is Proline--tRNA ligase (578 aa).

Belongs to the class-II aminoacyl-tRNA synthetase family. ProS type 1 subfamily. In terms of assembly, homodimer.

The protein localises to the cytoplasm. It catalyses the reaction tRNA(Pro) + L-proline + ATP = L-prolyl-tRNA(Pro) + AMP + diphosphate. Its function is as follows. Catalyzes the attachment of proline to tRNA(Pro) in a two-step reaction: proline is first activated by ATP to form Pro-AMP and then transferred to the acceptor end of tRNA(Pro). As ProRS can inadvertently accommodate and process non-cognate amino acids such as alanine and cysteine, to avoid such errors it has two additional distinct editing activities against alanine. One activity is designated as 'pretransfer' editing and involves the tRNA(Pro)-independent hydrolysis of activated Ala-AMP. The other activity is designated 'posttransfer' editing and involves deacylation of mischarged Ala-tRNA(Pro). The misacylated Cys-tRNA(Pro) is not edited by ProRS. This Burkholderia multivorans (strain ATCC 17616 / 249) protein is Proline--tRNA ligase.